A 389-amino-acid polypeptide reads, in one-letter code: Lipid-A-disaccharide synthase (389 aa).

Belongs to the LpxB family.

It carries out the reaction a lipid X + a UDP-2-N,3-O-bis[(3R)-3-hydroxyacyl]-alpha-D-glucosamine = a lipid A disaccharide + UDP + H(+). It functions in the pathway bacterial outer membrane biogenesis; LPS lipid A biosynthesis. In terms of biological role, condensation of UDP-2,3-diacylglucosamine and 2,3-diacylglucosamine-1-phosphate to form lipid A disaccharide, a precursor of lipid A, a phosphorylated glycolipid that anchors the lipopolysaccharide to the outer membrane of the cell. This chain is Lipid-A-disaccharide synthase, found in Albidiferax ferrireducens (strain ATCC BAA-621 / DSM 15236 / T118) (Rhodoferax ferrireducens).